A 180-amino-acid chain; its full sequence is Pro-glucagon (180 aa).

The first 20 residues, 1–20 (MKSIYFVAGLFVMLVQGSWQ), serve as a signal peptide directing secretion. The disordered stretch occupies residues 23-56 (LQDTEEKPRSFSTSQTDLLDDPDQMNEDKRHSQG). Phosphoserine is present on S54. Positions 84–89 (NRNEIA) are excised as a propeptide. Phosphoserine is present on residues S105 and S108. At R127 the chain carries Arginine amide. A propeptide spanning residues 131-145 (DFPEEVTIVEELRRR) is cleaved from the precursor. Residues S150 and S152 each carry the phosphoserine modification.

It belongs to the glucagon family. In terms of processing, proglucagon is post-translationally processed in a tissue-specific manner in pancreatic A cells and intestinal L cells. In pancreatic A cells, the major bioactive hormone is glucagon cleaved by PCSK2/PC2. In the intestinal L cells PCSK1/PC1 liberates GLP-1, GLP-2, glicentin and oxyntomodulin. GLP-1 is further N-terminally truncated by post-translational processing in the intestinal L cells resulting in GLP-1(7-37) GLP-1-(7-36)amide. The C-terminal amidation is neither important for the metabolism of GLP-1 nor for its effects on the endocrine pancreas. As to expression, glucagon is secreted in the A cells of the islets of Langerhans. GLP-1, GLP-2, oxyntomodulin and glicentin are secreted from enteroendocrine cells throughout the gastrointestinal tract. GLP-1 and GLP-2 are also secreted in selected neurons in the brain.

It is found in the secreted. Plays a key role in glucose metabolism and homeostasis. Regulates blood glucose by increasing gluconeogenesis and decreasing glycolysis. A counterregulatory hormone of insulin, raises plasma glucose levels in response to insulin-induced hypoglycemia. Plays an important role in initiating and maintaining hyperglycemic conditions in diabetes. Functionally, potent stimulator of glucose-dependent insulin release. Also stimulates insulin release in response to IL6. Plays important roles on gastric motility and the suppression of plasma glucagon levels. May be involved in the suppression of satiety and stimulation of glucose disposal in peripheral tissues, independent of the actions of insulin. Has growth-promoting activities on intestinal epithelium. May also regulate the hypothalamic pituitary axis (HPA) via effects on LH, TSH, CRH, oxytocin, and vasopressin secretion. Increases islet mass through stimulation of islet neogenesis and pancreatic beta cell proliferation. Inhibits beta cell apoptosis. In terms of biological role, stimulates intestinal growth and up-regulates villus height in the small intestine, concomitant with increased crypt cell proliferation and decreased enterocyte apoptosis. The gastrointestinal tract, from the stomach to the colon is the principal target for GLP-2 action. Plays a key role in nutrient homeostasis, enhancing nutrient assimilation through enhanced gastrointestinal function, as well as increasing nutrient disposal. Stimulates intestinal glucose transport and decreases mucosal permeability. Its function is as follows. Significantly reduces food intake. Inhibits gastric emptying in humans. Suppression of gastric emptying may lead to increased gastric distension, which may contribute to satiety by causing a sensation of fullness. May modulate gastric acid secretion and the gastro-pyloro-duodenal activity. May play an important role in intestinal mucosal growth in the early period of life. The sequence is that of Pro-glucagon (GCG) from Octodon degus (Degu).